The following is a 122-amino-acid chain: Large ribosomal subunit protein uL14 (122 aa).

The protein belongs to the universal ribosomal protein uL14 family. Part of the 50S ribosomal subunit. Forms a cluster with proteins L3 and L19. In the 70S ribosome, L14 and L19 interact and together make contacts with the 16S rRNA in bridges B5 and B8.

Binds to 23S rRNA. Forms part of two intersubunit bridges in the 70S ribosome. This Thermotoga petrophila (strain ATCC BAA-488 / DSM 13995 / JCM 10881 / RKU-1) protein is Large ribosomal subunit protein uL14.